Consider the following 485-residue polypeptide: NADH-quinone oxidoreductase subunit N (485 aa).

14 helical membrane-spanning segments follow: residues 8-28 (LIAL…MLSI), 35-55 (FINT…LYFV), 75-95 (LYIG…YSWL), 104-124 (EFYL…CANH), 125-145 (LASL…LIGY), 159-179 (YMLL…LLYA), 203-223 (ILSG…LVPF), 235-255 (PAPV…AVVI), 271-291 (TVLT…ALTQ), 297-317 (LLGY…VAVQ), 326-346 (VGIY…VVSL), 383-403 (LAGI…VLGV), 406-426 (ELWW…YYYL), and 455-475 (MVVL…QPLI).

Belongs to the complex I subunit 2 family. As to quaternary structure, NDH-1 is composed of 13 different subunits. Subunits NuoA, H, J, K, L, M, N constitute the membrane sector of the complex.

It is found in the cell inner membrane. It carries out the reaction a quinone + NADH + 5 H(+)(in) = a quinol + NAD(+) + 4 H(+)(out). NDH-1 shuttles electrons from NADH, via FMN and iron-sulfur (Fe-S) centers, to quinones in the respiratory chain. The immediate electron acceptor for the enzyme in this species is believed to be ubiquinone. Couples the redox reaction to proton translocation (for every two electrons transferred, four hydrogen ions are translocated across the cytoplasmic membrane), and thus conserves the redox energy in a proton gradient. The polypeptide is NADH-quinone oxidoreductase subunit N (Photorhabdus laumondii subsp. laumondii (strain DSM 15139 / CIP 105565 / TT01) (Photorhabdus luminescens subsp. laumondii)).